The sequence spans 308 residues: Acetylglutamate kinase (308 aa).

Substrate contacts are provided by residues 86 to 87 (GG), Arg108, and Asn201.

The protein belongs to the acetylglutamate kinase family. ArgB subfamily.

It is found in the cytoplasm. The catalysed reaction is N-acetyl-L-glutamate + ATP = N-acetyl-L-glutamyl 5-phosphate + ADP. It participates in amino-acid biosynthesis; L-arginine biosynthesis; N(2)-acetyl-L-ornithine from L-glutamate: step 2/4. Catalyzes the ATP-dependent phosphorylation of N-acetyl-L-glutamate. This chain is Acetylglutamate kinase, found in Prochlorococcus marinus (strain MIT 9313).